Reading from the N-terminus, the 101-residue chain is Apolipoprotein C-II (101 aa).

A signal peptide spans 1 to 22 (MGIRYLLVLVLVLLVLGCEVQG). The lipid binding stretch occupies residues 66–74 (TMDEKIREI). The interval 78–101 (STAAVSTYAGIFTDQLLSMLKGDQ) is lipoprotein lipase cofactor.

The protein belongs to the apolipoprotein C2 family. Post-translationally, proapolipoprotein C-II is synthesized as a sialic acid containing glycoprotein which is subsequently desialylated prior to its proteolytic processing. Proapolipoprotein C-II, the major form found in plasma undergoes proteolytic cleavage of its N-terminal hexapeptide to generate apolipoprotein C-II, which occurs as the minor form in plasma.

The protein resides in the secreted. Component of chylomicrons, very low-density lipoproteins (VLDL), low-density lipoproteins (LDL), and high-density lipoproteins (HDL) in plasma. Plays an important role in lipoprotein metabolism as an activator of lipoprotein lipase. Both proapolipoprotein C-II and apolipoprotein C-II can activate lipoprotein lipase. The polypeptide is Apolipoprotein C-II (APOC2) (Phoca vitulina (Harbor seal)).